A 1184-amino-acid polypeptide reads, in one-letter code: Probable phospholipid-transporting ATPase 12 (1184 aa).

Residues 1 to 75 are Cytoplasmic-facing; sequence MATVSGRRRK…TTKYTLATFL (75 aa). Residues 76–97 traverse the membrane as a helical segment; the sequence is PKSLFEQFRRVANFYFLVVGIL. The Extracellular portion of the chain corresponds to 98–101; the sequence is SFTP. Residues 102 to 124 traverse the membrane as a helical segment; that stretch reads LAPYTAVSAIVPLTFVILATMFK. Residues 125 to 306 lie on the Cytoplasmic side of the membrane; the sequence is EGVEDWRRKQ…SMIERKMDKI (182 aa). The chain crosses the membrane as a helical span at residues 307–328; that stretch reads IYLMFLMVFSLAFFGSVLFGIW. Residues 329–364 are Extracellular-facing; sequence TRDDFQNGVMERWYLKPDDSSIFFDPKRAPMAAIYH. A helical transmembrane segment spans residues 365–382; sequence FLTALMLNSYFIPISLYV. The Cytoplasmic portion of the chain corresponds to 383 to 921; it reads SIEIVKVLQS…HGHWCYRRIS (539 aa). Catalysis depends on D430, which acts as the 4-aspartylphosphate intermediate. Mg(2+) contacts are provided by D866 and D870. The chain crosses the membrane as a helical span at residues 922–941; that stretch reads KMICYFFYKNITFGFTLFLY. The Extracellular segment spans residues 942-955; sequence EAYTSFSATPAYND. Residues 956–975 form a helical membrane-spanning segment; the sequence is WYLSLYSVFFTSLPVICLGI. At 976–1005 the chain is on the cytoplasmic side; the sequence is FDQDVSAPFCLKFPVLYQEGVQNLLFSWRR. The chain crosses the membrane as a helical span at residues 1006–1028; the sequence is ILSWMFHGFCSAIIIFFLCKTSL. Residues 1029 to 1041 are Extracellular-facing; sequence ESQAFNHEGKTAG. Residues 1042–1064 traverse the membrane as a helical segment; sequence RDILGGTMYTCVVWVVSLQMVLT. Over 1065 to 1070 the chain is Cytoplasmic; it reads ISYFTL. A helical membrane pass occupies residues 1071–1091; it reads IQHVVVWGSVVIWYLFLMVYG. The Extracellular portion of the chain corresponds to 1092–1108; sequence SLPIRMSTDAYMVFLEA. A helical transmembrane segment spans residues 1109-1133; that stretch reads LAPAPSYWITTLFVVLSTMMPYFIF. At 1134–1184 the chain is on the cytoplasmic side; the sequence is SAIQMRFFPMSHGTVQLLRYEDQCSNSGNFEMGRQGSVRPTLVMRSHQPES.

The protein belongs to the cation transport ATPase (P-type) (TC 3.A.3) family. Type IV subfamily.

The protein resides in the membrane. The catalysed reaction is ATP + H2O + phospholipidSide 1 = ADP + phosphate + phospholipidSide 2.. Functionally, involved in transport of phospholipids. The sequence is that of Probable phospholipid-transporting ATPase 12 from Arabidopsis thaliana (Mouse-ear cress).